Consider the following 420-residue polypeptide: uncharacterized protein (420 aa).

6 helical membrane-spanning segments follow: residues 26–46 (IFLLLVILVFVPIGFVFQSVI), 66–86 (SAIKSITLLFLLLLFVNWFTF), 231–251 (VILAFYVTQKILIMILFATVL), 276–296 (IPVNVFAMTIAIAIRFVPSLL), 317–337 (GFLVKMRSLSSLVVPMVSIAF), and 369–389 (IDILALFLVFAWFVVIIFLTI).

It belongs to the CbiQ family.

It is found in the cell membrane. This is an uncharacterized protein from Mycoplasma genitalium (strain ATCC 33530 / DSM 19775 / NCTC 10195 / G37) (Mycoplasmoides genitalium).